The chain runs to 310 residues: Tagatose-6-phosphate kinase (310 aa).

This sequence belongs to the carbohydrate kinase PfkB family. LacC subfamily.

The enzyme catalyses D-tagatofuranose 6-phosphate + ATP = D-tagatofuranose 1,6-bisphosphate + ADP + H(+). It functions in the pathway carbohydrate metabolism; D-tagatose 6-phosphate degradation; D-glyceraldehyde 3-phosphate and glycerone phosphate from D-tagatose 6-phosphate: step 1/2. This Streptococcus uberis (strain ATCC BAA-854 / 0140J) protein is Tagatose-6-phosphate kinase.